A 262-amino-acid chain; its full sequence is Sulfur carrier protein FdhD (262 aa).

The active-site Cysteine persulfide intermediate is cysteine 107.

Belongs to the FdhD family.

The protein resides in the cytoplasm. Required for formate dehydrogenase (FDH) activity. Acts as a sulfur carrier protein that transfers sulfur from IscS to the molybdenum cofactor prior to its insertion into FDH. The protein is Sulfur carrier protein FdhD of Bacillus subtilis (strain 168).